The following is a 206-amino-acid chain: Protease (206 aa).

Residues His-55, Asp-72, and Cys-122 contribute to the active site.

It belongs to the peptidase C5 family. As to quaternary structure, interacts with protease cofactor pVI-C; this interaction is necessary for protease activation.

It localises to the virion. It is found in the host nucleus. It carries out the reaction Cleaves proteins of the adenovirus and its host cell at two consensus sites: -Yaa-Xaa-Gly-Gly-|-Xaa- and -Yaa-Xaa-Gly-Xaa-|-Gly- (in which Yaa is Met, Ile or Leu, and Xaa is any amino acid).. Its activity is regulated as follows. Requires DNA and protease cofactor for maximal activation. Inside nascent virions, becomes partially activated by binding to the viral DNA, allowing it to cleave the cofactor that binds to the protease and fully activates it. Actin, like the viral protease cofactor, seems to act as a cofactor in the cleavage of cytokeratin 18 and of actin itself. Cleaves viral precursor proteins (pTP, pIIIa, pVI, pVII, pVIII, and pX) inside newly assembled particles giving rise to mature virions. Protease complexed to its cofactor slides along the viral DNA to specifically locate and cleave the viral precursors. Mature virions have a weakened organization compared to the unmature virions, thereby facilitating subsequent uncoating. Without maturation, the particle lacks infectivity and is unable to uncoat. Late in adenovirus infection, in the cytoplasm, may participate in the cytoskeleton destruction. Cleaves host cell cytoskeletal keratins K7 and K18. The protein is Protease of Fowl adenovirus A serotype 1 (strain CELO / Phelps) (FAdV-1).